Reading from the N-terminus, the 352-residue chain is MTAILERRESASLWARFCEWITSTENRLYIGWFGVLMIPTLLTATSVFIIAFIAAPPVDIDGIREPVSGYLLYGNNIISGAVVPTSNAIGLHFYPIWEAASLDEWLYNGGPYQLIVCHFFLGICCYMGREWELSFRLGMRPWIAVAYSAPVAAATAVFIIYPIGQGSFSDGMPLGISGTFNFMIVFQAEHNILMHPFHMLGVAGVFGGSLFSAMHGSLVTSSLIRETTENESRNAGYKFGQEEETYNIVAAHGYFGRLIFQYASFNNSRSLHFFLAAWPVVGIWFTALGISTMAFNLNGFNFNQSVVDSQGRVINTWADIINRANLGMEVMHERNAHNFPLDLASVEAPSIA.

An N-acetylthreonine modification is found at T2. T2 is modified (phosphothreonine). Transmembrane regions (helical) follow at residues 29–46, 118–133, and 142–156; these read YIGWFGVLMIPTLLTATS, HFFLGICCYMGREWEL, and WIAVAYSAPVAAATA. H118 serves as a coordination point for chlorophyll a. Y126 contributes to the pheophytin a binding site. [CaMn4O5] cluster contacts are provided by D170 and E189. The chain crosses the membrane as a helical span at residues 197-218; it reads FHMLGVAGVFGGSLFSAMHGSL. Residue H198 coordinates chlorophyll a. A quinone is bound by residues H215 and 264–265; that span reads SF. H215 is a Fe cation binding site. A Fe cation-binding site is contributed by H272. Residues 274–288 form a helical membrane-spanning segment; that stretch reads FLAAWPVVGIWFTAL. Residues H332, E333, D342, and A344 each contribute to the [CaMn4O5] cluster site. Residues 345–352 constitute a propeptide that is removed on maturation; sequence SVEAPSIA.

It belongs to the reaction center PufL/M/PsbA/D family. As to quaternary structure, PSII is composed of 1 copy each of membrane proteins PsbA, PsbB, PsbC, PsbD, PsbE, PsbF, PsbH, PsbI, PsbJ, PsbK, PsbL, PsbM, PsbT, PsbX, PsbY, PsbZ, Psb30/Ycf12, at least 3 peripheral proteins of the oxygen-evolving complex and a large number of cofactors. It forms dimeric complexes. The D1/D2 heterodimer binds P680, chlorophylls that are the primary electron donor of PSII, and subsequent electron acceptors. It shares a non-heme iron and each subunit binds pheophytin, quinone, additional chlorophylls, carotenoids and lipids. D1 provides most of the ligands for the Mn4-Ca-O5 cluster of the oxygen-evolving complex (OEC). There is also a Cl(-1) ion associated with D1 and D2, which is required for oxygen evolution. The PSII complex binds additional chlorophylls, carotenoids and specific lipids. serves as cofactor. In terms of processing, tyr-161 forms a radical intermediate that is referred to as redox-active TyrZ, YZ or Y-Z. Post-translationally, C-terminally processed by CTPA; processing is essential to allow assembly of the oxygen-evolving complex and thus photosynthetic growth.

Its subcellular location is the plastid. It localises to the chloroplast thylakoid membrane. It carries out the reaction 2 a plastoquinone + 4 hnu + 2 H2O = 2 a plastoquinol + O2. Photosystem II (PSII) is a light-driven water:plastoquinone oxidoreductase that uses light energy to abstract electrons from H(2)O, generating O(2) and a proton gradient subsequently used for ATP formation. It consists of a core antenna complex that captures photons, and an electron transfer chain that converts photonic excitation into a charge separation. The D1/D2 (PsbA/PsbD) reaction center heterodimer binds P680, the primary electron donor of PSII as well as several subsequent electron acceptors. This is Photosystem II protein D1 from Chlorella ellipsoidea.